The following is a 336-amino-acid chain: tRNA-splicing endonuclease (336 aa).

Active-site residues include Tyr-271, His-282, and Lys-313.

This sequence belongs to the tRNA-intron endonuclease family. Archaeal long subfamily. Homodimer.

It carries out the reaction pretRNA = a 3'-half-tRNA molecule with a 5'-OH end + a 5'-half-tRNA molecule with a 2',3'-cyclic phosphate end + an intron with a 2',3'-cyclic phosphate and a 5'-hydroxyl terminus.. Its function is as follows. Endonuclease that removes tRNA introns. Cleaves pre-tRNA at the 5'- and 3'-splice sites to release the intron. The products are an intron and two tRNA half-molecules bearing 2',3' cyclic phosphate and 5'-OH termini. Recognizes a pseudosymmetric substrate in which 2 bulged loops of 3 bases are separated by a stem of 4 bp. The protein is tRNA-splicing endonuclease of Natronomonas pharaonis (strain ATCC 35678 / DSM 2160 / CIP 103997 / JCM 8858 / NBRC 14720 / NCIMB 2260 / Gabara) (Halobacterium pharaonis).